A 129-amino-acid polypeptide reads, in one-letter code: MFTLPYYLPQNLNKCIISESKTLEKNSLIYAQGEKPKEFYFLKQGLVGLYHSLENGKETLTRLYHANEYFGFRTIFSETSYHCSAKVLMEADIVRIFPGNHANFIANNPDFSCYLMKQLSNELLMQNTE.

This is an uncharacterized protein from Haemophilus influenzae (strain ATCC 51907 / DSM 11121 / KW20 / Rd).